A 500-amino-acid chain; its full sequence is Glycerol kinase (500 aa).

Thr-11 contacts ADP. Residues Thr-11, Thr-12, and Ser-13 each contribute to the ATP site. Thr-11 contributes to the sn-glycerol 3-phosphate binding site. Arg-15 is an ADP binding site. Arg-81, Glu-82, Tyr-133, and Asp-242 together coordinate sn-glycerol 3-phosphate. Positions 81, 82, 133, 242, and 243 each coordinate glycerol. 2 residues coordinate ADP: Thr-264 and Gly-307. The ATP site is built by Thr-264, Gly-307, Gln-311, and Gly-411. Residue Gly-411 participates in ADP binding.

Belongs to the FGGY kinase family.

The enzyme catalyses glycerol + ATP = sn-glycerol 3-phosphate + ADP + H(+). Its pathway is polyol metabolism; glycerol degradation via glycerol kinase pathway; sn-glycerol 3-phosphate from glycerol: step 1/1. Its activity is regulated as follows. Inhibited by fructose 1,6-bisphosphate (FBP). In terms of biological role, key enzyme in the regulation of glycerol uptake and metabolism. Catalyzes the phosphorylation of glycerol to yield sn-glycerol 3-phosphate. The sequence is that of Glycerol kinase from Rhodopseudomonas palustris (strain ATCC BAA-98 / CGA009).